We begin with the raw amino-acid sequence, 383 residues long: Lipid-A-disaccharide synthase (383 aa).

Belongs to the LpxB family.

It carries out the reaction 2-N,3-O-bis[(3R)-3-hydroxytetradecanoyl]-alpha-D-glucosaminyl 1-phosphate + UDP-2-N,3-O-bis[(3R)-3-hydroxytetradecanoyl]-alpha-D-glucosamine = lipid A disaccharide (E. coli) + UDP + H(+). It catalyses the reaction a lipid X + a UDP-2-N,3-O-bis[(3R)-3-hydroxyacyl]-alpha-D-glucosamine = a lipid A disaccharide + UDP + H(+). Its pathway is glycolipid biosynthesis; lipid IV(A) biosynthesis; lipid IV(A) from (3R)-3-hydroxytetradecanoyl-[acyl-carrier-protein] and UDP-N-acetyl-alpha-D-glucosamine: step 5/6. Its function is as follows. Condensation of UDP-2,3-diacylglucosamine and 2,3-diacylglucosamine-1-phosphate to form lipid A disaccharide, a precursor of lipid A, a phosphorylated glycolipid that anchors the lipopolysaccharide to the outer membrane of the cell. This chain is Lipid-A-disaccharide synthase, found in Pectobacterium atrosepticum (strain SCRI 1043 / ATCC BAA-672) (Erwinia carotovora subsp. atroseptica).